The primary structure comprises 325 residues: D site-binding protein (325 aa).

Disordered regions lie at residues 1–99 (MARP…APGL), 127–200 (GLPP…DTVE), and 229–255 (RFSE…EQKD). Residues 17-28 (GPAGTPPGGGAL) are compositionally biased toward gly residues. Low complexity-rich tracts occupy residues 29 to 38 (LGLRSLLQGT) and 57 to 80 (ALPA…PAGA). The residue at position 86 (Ser86) is a Phosphoserine. Residues 129–153 (PPSPPPPGGPSPEPSPARTPAPSPG) show a composition bias toward pro residues. The segment covering 157 to 167 (CGSASPRSSPG) has biased composition (low complexity). The 64-residue stretch at 255–318 (DEKYWSRRYK…SHYRAVLSRY (64 aa)) folds into the bZIP domain. The basic motif stretch occupies residues 257-279 (KYWSRRYKNNEAAKRSRDARRLK). The interval 283–297 (ISVRAAFLEKENALL) is leucine-zipper.

Belongs to the bZIP family. PAR subfamily. In terms of assembly, binds DNA as a homodimer or a heterodimer. Can form a heterodimer with TEF. Ubiquitously expressed. Expressed in the suprachiasmatic nuclei (SCN) and in most peripheral tissues, with a strong circadian rhythmicity.

The protein localises to the nucleus. Functionally, this transcriptional activator recognizes and binds to the sequence 5'-RTTAYGTAAY-3' found in the promoter of genes such as albumin, CYP2A4 and CYP2A5. It is not essential for circadian rhythm generation, but modulates important clock output genes. May be a direct target for regulation by the circadian pacemaker component clock. May affect circadian period and sleep regulation. This is D site-binding protein (DBP) from Homo sapiens (Human).